The primary structure comprises 435 residues: Chaperone SurA (435 aa).

A signal peptide spans 1–29 (MINKTLHTKHTLLGLLAMAVLMIPVWSQA). 2 consecutive PpiC domains span residues 180 to 281 (QEDF…KMID) and 290 to 390 (VTQY…RVDD).

It is found in the periplasm. The catalysed reaction is [protein]-peptidylproline (omega=180) = [protein]-peptidylproline (omega=0). Its function is as follows. Chaperone involved in the correct folding and assembly of outer membrane proteins. Recognizes specific patterns of aromatic residues and the orientation of their side chains, which are found more frequently in integral outer membrane proteins. May act in both early periplasmic and late outer membrane-associated steps of protein maturation. This Alcanivorax borkumensis (strain ATCC 700651 / DSM 11573 / NCIMB 13689 / SK2) protein is Chaperone SurA.